Here is a 57-residue protein sequence, read N- to C-terminus: Large ribosomal subunit protein bL32c (57 aa).

The protein belongs to the bacterial ribosomal protein bL32 family.

It localises to the plastid. It is found in the chloroplast. This Phalaenopsis aphrodite subsp. formosana (Moth orchid) protein is Large ribosomal subunit protein bL32c.